The chain runs to 750 residues: Glycerophosphodiester phosphodiesterase GDPDL7 (750 aa).

A signal peptide spans 1–17 (MLRFIIFFSLFIHLCVA). GP-PDE domains lie at 41 to 339 (PAVV…SQSI) and 355 to 654 (ALVI…TRYL). 4 N-linked (GlcNAc...) asparagine glycosylation sites follow: asparagine 134, asparagine 304, asparagine 603, and asparagine 716.

It belongs to the glycerophosphoryl diester phosphodiesterase family. In terms of tissue distribution, expressed in flowers and siliques.

It catalyses the reaction a sn-glycero-3-phosphodiester + H2O = an alcohol + sn-glycerol 3-phosphate + H(+). In Arabidopsis thaliana (Mouse-ear cress), this protein is Glycerophosphodiester phosphodiesterase GDPDL7.